Reading from the N-terminus, the 457-residue chain is DDB1- and CUL4-associated factor 10 (457 aa).

WD repeat units follow at residues 65-104 (RTHGAVFNLEYSPDGSVLTVACEQTEVLLFDPVSSKHIKT), 108-146 (AHEDCVNNIRFLDNRMFATCSDDTTIALWDLRKLNSKVC), 150-189 (GHTSWVKNIEYDTNTRLLVTSGFDGNVIIWDTNRCTEDGC), and 195-234 (FHTRFLMRMRLTPDCSKMLISTSSGYLLILHELDLTKSLE). The segment covering 246–265 (TASTSDMTSTSSDTRPSSSP) has biased composition (low complexity). Positions 246-304 (TASTSDMTSTSSDTRPSSSPCHNSDLGPLFEKHMSRSSQREGASPRNSLEVLTPEVPGE) are disordered. A compositionally biased stretch (polar residues) spans 281 to 292 (RSSQREGASPRN). WD repeat units lie at residues 306 to 346 (DRGN…QEGA), 368 to 406 (VGRGYIKELCFSPDGRMIASPYAYGIRLLGFDSQCKELV), and 424 to 457 (SHKDVVLTTKFSPTHCQIASGCLSGRVTLYQPKF).

Belongs to the WD repeat DCAF10 family.

The protein operates within protein modification; protein ubiquitination. May function as a substrate receptor for CUL4-DDB1 E3 ubiquitin-protein ligase complex. This is DDB1- and CUL4-associated factor 10 (dcaf10) from Xenopus tropicalis (Western clawed frog).